A 440-amino-acid polypeptide reads, in one-letter code: MNKFRTFPQINTLIQDESLKSYPFYIKAFFCKKVVAKLKENFSRDEISKDKLLLEIKKEIKTFYRKDLQSVINASGVVIHTNLGRSVIHEELYEACKDIICNYSNVEFDLENGKRGSRYALVLEKLKMLFECEDALVVNNNAAAVFLVLNSLCYDKEVISSRGELVEIGGSFRVPEVIKAAGVKLCEVGTSNKTHLKDYEQAINENTALILKTHKSNFALMGFHSEVNIKDLHELVKEKGLLSYYDLGSGWCENLNEKLIKNEPKIKKLVQECDILSFSGDKLFGSVQAGIILGKKELIGKLKQNQLLRMLRVDKLTLSFLNESLKAYLQKDYEKIITLKLLNDDLSFIEEKALRVQKELKFQTQLKKSKSLVGGGSMPDKSLDTYILTFQGDALKLQTRFRKENIIGRIENDEFVLDFRTIRENELQKLILKINQMENL.

The residue at position 282 (K282) is an N6-(pyridoxal phosphate)lysine.

This sequence belongs to the SelA family. Pyridoxal 5'-phosphate serves as cofactor.

The protein localises to the cytoplasm. It catalyses the reaction L-seryl-tRNA(Sec) + selenophosphate + H(+) = L-selenocysteinyl-tRNA(Sec) + phosphate. It functions in the pathway aminoacyl-tRNA biosynthesis; selenocysteinyl-tRNA(Sec) biosynthesis; selenocysteinyl-tRNA(Sec) from L-seryl-tRNA(Sec) (bacterial route): step 1/1. Its function is as follows. Converts seryl-tRNA(Sec) to selenocysteinyl-tRNA(Sec) required for selenoprotein biosynthesis. In Campylobacter jejuni subsp. doylei (strain ATCC BAA-1458 / RM4099 / 269.97), this protein is L-seryl-tRNA(Sec) selenium transferase.